The following is a 102-amino-acid chain: Carboxysome shell protein CcmK3 (102 aa).

The region spanning Ala-4 to Pro-90 is the BMC domain.

This sequence belongs to the bacterial microcompartments protein family. CcmK subfamily. In terms of assembly, interacts stably with CcmK4, forming heterohexamers that can make dodecamers. Heterohexamers have a 1:2 CcmK3:CcmK4 stoichiometry. Upon expression in E.coli forms oligomers that could be dimers or trimers, but never hexamers; bulky residues in the pore region probably preclude the formation of homohexamers.

The protein resides in the carboxysome. In terms of biological role, a probably non-essential, minor shell protein of the carboxysome, a polyhedral inclusion where RuBisCO (ribulose bisphosphate carboxylase, rbcL-rbcS) is sequestered. Hexamers form sheets that form the facets of the polyhedral carboxysome. In PCC 7418 there are several CcmK paralogs with presumably functional differences. This subunit probably only makes heterohexamers with CcmK4. Heterohexamers can also make dodecamers, formation depends on buffer conditions. This is Carboxysome shell protein CcmK3 from Halothece sp. (strain PCC 7418) (Synechococcus sp. (strain PCC 7418)).